The following is a 95-amino-acid chain: RING finger protein Z (95 aa).

Over residues Met-1–Ser-16 the composition is skewed to low complexity. Residues Met-1 to Val-23 are disordered. Gly-2 carries the N-myristoyl glycine; by host lipid modification. An RING-type; atypical zinc finger spans residues Cys-40–Cys-76. The short motif at Pro-90–Pro-93 is the PTAP/PSAP motif element.

This sequence belongs to the arenaviridae Z protein family. Interacts with protein NP; this interaction probably directs the encapsidated genome to budding sites. Interacts (via RING domain) with polymerase L; this interaction inhibits viral transcription and replication, Z partially blocks the product exit tunnel for the releasing nascent RNA product. Interacts with the glycoprotein complex; this interaction plays a role in virion budding. Interacts with host eIF4E; this interaction results in eIF4E reduced affinity for its substrate, the 5'-m7 G cap structure. Interacts (via late-budding domain) with host TSG101; this interaction is essential for budding and release of viral particles. Interacts with host RPLP0; this interaction may serve to load ribosome-like particles inside the virion. Interacts with host PML; this interaction induces PML bodies redistribution in the cytoplasm upon viral infection. In terms of processing, myristoylation is required for the role of RING finger protein Z in assembly and budding.

The protein localises to the virion. It localises to the host cytoplasm. It is found in the host perinuclear region. The protein resides in the host cell membrane. Plays a crucial role in virion assembly and budding. Expressed late in the virus life cycle, it acts as an inhibitor of viral transcription and RNA synthesis by interacting with the viral polymerase L. Presumably recruits the NP encapsidated genome to cellular membranes at budding sites via direct interaction with NP. Plays critical roles in the final steps of viral release by interacting with host TSG101, a member of the vacuolar protein-sorting pathway and using other cellular host proteins involved in vesicle formation pathway. The budding of the virus progeny occurs after association of protein Z with the viral glycoprotein complex SSP-GP1-GP2 at the cell periphery, step that requires myristoylation of protein Z. Also selectively represses protein production by associating with host eIF4E. In cell-based minigenome assay, has an inhibitory effect on the ribonucleoprotein machinery (vRNP), which is responsible for the replication and transcription of the viral genome. The polypeptide is RING finger protein Z (Guanarito mammarenavirus (isolate Human/Venezuela/NH-95551/1990) (GTOV)).